The chain runs to 449 residues: Putative F-box/LRR-repeat protein At3g44090 (449 aa).

Residues 23–77 (LASMDCLPDDLLVQILYFLPTKEAISTSLLSKRWRTLYSLVHNLDLDDYIFWHHE) form the F-box domain. 6 LRR repeats span residues 133 to 163 (YYNLQKDSLWQFGFPYKVFTSTKLVKLSLGT), 186 to 212 (YIWFEDNQLSDVFLAACPALEDLTIHH), 214 to 231 (FRPFLISSKNLKKLSVTI), 247 to 278 (TPNVVDLYYSDFPRPIAPHCHLDSLAKVELDL), 286 to 311 (RQVQNDADVKNLISEIRNVKTLHLTY), and 320 to 345 (SKKRDWKVLPLLLERSPNLKTLVLSG).

The sequence is that of Putative F-box/LRR-repeat protein At3g44090 from Arabidopsis thaliana (Mouse-ear cress).